The chain runs to 356 residues: Replication factor C subunit 3 (356 aa).

K20 carries the N6-acetyllysine modification. Residue S125 is modified to Phosphoserine.

The protein belongs to the activator 1 small subunits family. Subunit of the RFC complex, an heteropentameric complex consisting of a large subunit RFC1 and four small subunits RFC2, RFC3, RFC4 and RFC5; the RFC complex interacts with PCNA. Forms an heterotetrameric complex with RFC2, RFC4 and RFC5; this complex has ATPase activity but is not stimulated by PCNA. The heterotetramer of subunits RFC2, RFC3, RFC4 and RFC5 interacts with RAD17. Interacts with CNTD1; this interaction facilitates crossover formation.

The protein resides in the nucleus. In terms of biological role, subunit of the replication factor C (RFC) complex which acts during elongation of primed DNA templates by DNA polymerases delta and epsilon, and is necessary for ATP-dependent loading of proliferating cell nuclear antigen (PCNA) onto primed DNA. In Homo sapiens (Human), this protein is Replication factor C subunit 3 (RFC3).